The chain runs to 255 residues: Thiazole synthase (255 aa).

Lys-96 acts as the Schiff-base intermediate with DXP in catalysis. Residues Gly-157, 183–184 (AG), and 205–206 (NS) contribute to the 1-deoxy-D-xylulose 5-phosphate site.

The protein belongs to the ThiG family. As to quaternary structure, homotetramer. Forms heterodimers with either ThiH or ThiS.

It localises to the cytoplasm. It carries out the reaction [ThiS sulfur-carrier protein]-C-terminal-Gly-aminoethanethioate + 2-iminoacetate + 1-deoxy-D-xylulose 5-phosphate = [ThiS sulfur-carrier protein]-C-terminal Gly-Gly + 2-[(2R,5Z)-2-carboxy-4-methylthiazol-5(2H)-ylidene]ethyl phosphate + 2 H2O + H(+). Its pathway is cofactor biosynthesis; thiamine diphosphate biosynthesis. Functionally, catalyzes the rearrangement of 1-deoxy-D-xylulose 5-phosphate (DXP) to produce the thiazole phosphate moiety of thiamine. Sulfur is provided by the thiocarboxylate moiety of the carrier protein ThiS. In vitro, sulfur can be provided by H(2)S. The polypeptide is Thiazole synthase (Exiguobacterium sibiricum (strain DSM 17290 / CCUG 55495 / CIP 109462 / JCM 13490 / 255-15)).